Here is a 101-residue protein sequence, read N- to C-terminus: Urease subunit beta (101 aa).

It belongs to the urease beta subunit family. In terms of assembly, heterotrimer of UreA (gamma), UreB (beta) and UreC (alpha) subunits. Three heterotrimers associate to form the active enzyme.

The protein resides in the cytoplasm. It carries out the reaction urea + 2 H2O + H(+) = hydrogencarbonate + 2 NH4(+). It participates in nitrogen metabolism; urea degradation; CO(2) and NH(3) from urea (urease route): step 1/1. The polypeptide is Urease subunit beta (Ectopseudomonas mendocina (strain ymp) (Pseudomonas mendocina)).